The sequence spans 478 residues: Amino acid oxidase imqH (478 aa).

The signal sequence occupies residues 1-22 (MPAPKSIIIVGSGVFGLSTAHA). Positions 14, 15, 38, 53, 57, 58, 63, and 64 each coordinate FAD. Asn-97 and Asn-167 each carry an N-linked (GlcNAc...) asparagine glycan. Val-208 provides a ligand contact to FAD. Cys-399 is modified (S-8alpha-FAD cysteine). Residues Phe-432 and Lys-433 each contribute to the FAD site.

It belongs to the MSOX/MTOX family. As to quaternary structure, dimer. Requires FAD as cofactor.

Its pathway is secondary metabolite biosynthesis. Functionally, nonribosomal peptide synthetase; part of the gene cluster that mediates the biosynthesis of imizoquins A to D, tripeptide-derived alkaloids that serve a protective role against oxidative stress that are essential for normal germination. ImqB is a canonical three-module NRPS that assembles the tripeptide backbone of the imizoquins via condensation of Trp, Tyr, and Leu-derived precursors. N-methylation by imqF and phenol oxidation by imqC, followed by cyclization via the FAD-dependent oxidase imqH carry out the three-step transformation of L-tyrosine into tetrahydroisoquinoline. Importantly, this sequence requires the presence of a free amine in the tyrosine moiety, indicating that isoquinoline formation occurs prior to peptide bond formation. The imidazolidin-4-one ring of imizoquins could form following additional oxidation of the methyl-derived bridgehead carbon by imqH. Lastly, O-methylation by imqG and leucine hydroxylation by imqE complete biosynthesis of the imizoquins. This Aspergillus flavus (strain ATCC 200026 / FGSC A1120 / IAM 13836 / NRRL 3357 / JCM 12722 / SRRC 167) protein is Amino acid oxidase imqH.